The primary structure comprises 955 residues: MAKVRVYELAKEFGVESKAVLAKLQEMGEFVRSASSTVEAPVVRRLKEAFSQSSESTEGAKGGQEKKKPSPKPQPSPQQQTKASAPSAGGETPRPAVPKPGPGLKPGPRPVPKPGPRPGPRPEGGAGKAGQQPSGAQGPARPESGKTPRPVPKPGPRPGNNPFSSTASGMGTRPTPRPPASGGTGAPRPGPRPHPGMMPPRPGASAGGPPRPQAPRPQAPRPGPGTAGGRPGSSAGGPPRPVPRPGPRPSPMNMPASRPTPPGGARPSTSSRSGGGRGRGGGGGAGPRGGGAGGGAPRTGFGGRPGGGRGRGGTAGAFGRPGGRPSRSRKSKKQRRQELKDMQAPSFGGVKIPSGNGKVIRLSRGASLADFGERIDVNPASLVQVVMTQLGEMVTATQSLPDETLQLLGEELNYTVEVVSPEDEDRELLESFSIEFGEDIGSEEDLKPRAPVVTVMGHVDHGKTRLLDAIRNTNVASGEAGGITQHIGAYQVTTTVDGEERKITFIDTPGHEAFTAMRARGAQATDIAVLVVAADDGVKPQTAEAIDHAKAADVPIVVAVNKIDLPTADPQKVRAQLTEYGLVAEEYGGNVQFVDISAKENLNIDQLLEAIILTADAELDLKANPDMPAQGLAIEAYLDRGRGSMATVLVQRGTLRVGDSIVCGDAYGRVRAMLDENGNRVKEAEPSRPVQVLGLTNVPSAGDSFLVVKDDRVARQIAQQREARERFAQQAKASRRVTLDNWQKTLEEGQREELLLIIKGDMSGSVEALEESLLKIDPGTDEVAIRVIGRGVGAITQNDINLAASSGAVIIGFNVRPEGKNSELAERMGVDIRYYSVIYQAIEEVEAALKGMLKPEYEEVQLGTAEIREIFKVPRVGNVAGAVVRSGVIKRNAKARLIRDGVVVSDNLTVESLRRFKDDVTEVREGFECGIGIGYNDIRVEDIIETFEMREKPRD.

The tract at residues 49–352 is disordered; it reads AFSQSSESTE…QAPSFGGVKI (304 aa). The segment covering 77–88 has biased composition (low complexity); sequence PQQQTKASAPSA. Pro residues-rich tracts occupy residues 95-121, 149-159, 188-202, and 209-223; these read PAVP…PGPR, RPVPKPGPRPG, RPGP…PPRP, and PPRP…PRPG. A compositionally biased stretch (gly residues) spans 225 to 235; it reads GTAGGRPGSSA. Residues 238 to 264 are compositionally biased toward pro residues; sequence PPRPVPRPGPRPSPMNMPASRPTPPGG. Residues 273–322 are compositionally biased toward gly residues; that stretch reads SGGGRGRGGGGGAGPRGGGAGGGAPRTGFGGRPGGGRGRGGTAGAFGRPG. Residues 326–335 are compositionally biased toward basic residues; it reads SRSRKSKKQR. Residues 448-620 form the tr-type G domain; it reads PRAPVVTVMG…IILTADAELD (173 aa). Residues 457-464 form a G1 region; the sequence is GHVDHGKT. 457-464 is a binding site for GTP; the sequence is GHVDHGKT. Residues 482-486 are G2; it reads GITQH. A G3 region spans residues 507 to 510; that stretch reads DTPG. Residues 507–511 and 561–564 each bind GTP; these read DTPGH and NKID. The tract at residues 561-564 is G4; it reads NKID. The segment at 597–599 is G5; it reads SAK.

Belongs to the TRAFAC class translation factor GTPase superfamily. Classic translation factor GTPase family. IF-2 subfamily.

The protein resides in the cytoplasm. Its function is as follows. One of the essential components for the initiation of protein synthesis. Protects formylmethionyl-tRNA from spontaneous hydrolysis and promotes its binding to the 30S ribosomal subunits. Also involved in the hydrolysis of GTP during the formation of the 70S ribosomal complex. The protein is Translation initiation factor IF-2 of Thermobifida fusca (strain YX).